We begin with the raw amino-acid sequence, 300 residues long: Glycine--tRNA ligase alpha subunit (300 aa).

This sequence belongs to the class-II aminoacyl-tRNA synthetase family. Tetramer of two alpha and two beta subunits.

The protein resides in the cytoplasm. The enzyme catalyses tRNA(Gly) + glycine + ATP = glycyl-tRNA(Gly) + AMP + diphosphate. This chain is Glycine--tRNA ligase alpha subunit, found in Prochlorococcus marinus (strain MIT 9313).